The primary structure comprises 236 residues: Thiamine-phosphate synthase (236 aa).

4-amino-2-methyl-5-(diphosphooxymethyl)pyrimidine contacts are provided by residues 57–61 (QLRDK) and asparagine 89. Mg(2+)-binding residues include aspartate 90 and aspartate 109. Position 128 (serine 128) interacts with 4-amino-2-methyl-5-(diphosphooxymethyl)pyrimidine. Position 154 to 156 (154 to 156 (TPS)) interacts with 2-[(2R,5Z)-2-carboxy-4-methylthiazol-5(2H)-ylidene]ethyl phosphate. Position 157 (lysine 157) interacts with 4-amino-2-methyl-5-(diphosphooxymethyl)pyrimidine. 2-[(2R,5Z)-2-carboxy-4-methylthiazol-5(2H)-ylidene]ethyl phosphate is bound by residues glycine 185 and 205 to 206 (IS).

The protein belongs to the thiamine-phosphate synthase family. Mg(2+) is required as a cofactor.

The enzyme catalyses 2-[(2R,5Z)-2-carboxy-4-methylthiazol-5(2H)-ylidene]ethyl phosphate + 4-amino-2-methyl-5-(diphosphooxymethyl)pyrimidine + 2 H(+) = thiamine phosphate + CO2 + diphosphate. The catalysed reaction is 2-(2-carboxy-4-methylthiazol-5-yl)ethyl phosphate + 4-amino-2-methyl-5-(diphosphooxymethyl)pyrimidine + 2 H(+) = thiamine phosphate + CO2 + diphosphate. It carries out the reaction 4-methyl-5-(2-phosphooxyethyl)-thiazole + 4-amino-2-methyl-5-(diphosphooxymethyl)pyrimidine + H(+) = thiamine phosphate + diphosphate. The protein operates within cofactor biosynthesis; thiamine diphosphate biosynthesis; thiamine phosphate from 4-amino-2-methyl-5-diphosphomethylpyrimidine and 4-methyl-5-(2-phosphoethyl)-thiazole: step 1/1. Its function is as follows. Condenses 4-methyl-5-(beta-hydroxyethyl)thiazole monophosphate (THZ-P) and 2-methyl-4-amino-5-hydroxymethyl pyrimidine pyrophosphate (HMP-PP) to form thiamine monophosphate (TMP). This Roseiflexus sp. (strain RS-1) protein is Thiamine-phosphate synthase.